A 173-amino-acid polypeptide reads, in one-letter code: Shikimate kinase (173 aa).

14–19 lines the ATP pocket; the sequence is GAGKST. S18 lines the Mg(2+) pocket. D36, R60, and G82 together coordinate substrate. R120 lines the ATP pocket. R139 provides a ligand contact to substrate. Q156 contributes to the ATP binding site.

It belongs to the shikimate kinase family. In terms of assembly, monomer. Mg(2+) serves as cofactor.

Its subcellular location is the cytoplasm. It carries out the reaction shikimate + ATP = 3-phosphoshikimate + ADP + H(+). Its pathway is metabolic intermediate biosynthesis; chorismate biosynthesis; chorismate from D-erythrose 4-phosphate and phosphoenolpyruvate: step 5/7. Catalyzes the specific phosphorylation of the 3-hydroxyl group of shikimic acid using ATP as a cosubstrate. The chain is Shikimate kinase from Actinobacillus pleuropneumoniae serotype 5b (strain L20).